Here is a 114-residue protein sequence, read N- to C-terminus: Ig heavy chain V region GOM (114 aa).

The 112-residue stretch at 1–112 folds into the Ig-like domain; it reads EVQLVESGGD…YWGQGTLVTV (112 aa).

The polypeptide is Ig heavy chain V region GOM (Canis lupus familiaris (Dog)).